The primary structure comprises 232 residues: Sugar fermentation stimulation protein homolog (232 aa).

Belongs to the SfsA family.

This chain is Sugar fermentation stimulation protein homolog, found in Moorella thermoacetica (strain ATCC 39073 / JCM 9320).